Here is a 94-residue protein sequence, read N- to C-terminus: Integration host factor subunit beta (94 aa).

Belongs to the bacterial histone-like protein family. In terms of assembly, heterodimer of an alpha and a beta chain.

Its function is as follows. This protein is one of the two subunits of integration host factor, a specific DNA-binding protein that functions in genetic recombination as well as in transcriptional and translational control. The protein is Integration host factor subunit beta of Mannheimia succiniciproducens (strain KCTC 0769BP / MBEL55E).